The following is a 419-amino-acid chain: Elongation factor Tu, chloroplastic (419 aa).

The 205-residue stretch at 10 to 214 folds into the tr-type G domain; the sequence is KPHVNIGTIG…KVDEYIPTPD (205 aa). Positions 19–26 are G1; that stretch reads GHVDHGKT. 19-26 serves as a coordination point for GTP; the sequence is GHVDHGKT. A Mg(2+)-binding site is contributed by T26. A G2 region spans residues 60–64; the sequence is GITIN. The G3 stretch occupies residues 81 to 84; the sequence is DCPG. Residues 81-85 and 136-139 contribute to the GTP site; these read DCPGH and NKED. Residues 136 to 139 are G4; that stretch reads NKED. The G5 stretch occupies residues 174 to 176; the sequence is SAL.

Belongs to the TRAFAC class translation factor GTPase superfamily. Classic translation factor GTPase family. EF-Tu/EF-1A subfamily.

The protein localises to the plastid. It is found in the chloroplast. The enzyme catalyses GTP + H2O = GDP + phosphate + H(+). In terms of biological role, GTP hydrolase that promotes the GTP-dependent binding of aminoacyl-tRNA to the A-site of ribosomes during protein biosynthesis. This chain is Elongation factor Tu, chloroplastic (tufA), found in Tetradesmus obliquus (Green alga).